The primary structure comprises 277 residues: uncharacterized protein (277 aa).

Positions 1–25 (MNKKSIWSKTAFGSLFLLLGTAFTA) are cleaved as a signal peptide. Cys-26 carries the N-palmitoyl cysteine lipid modification. A lipid anchor (S-diacylglycerol cysteine) is attached at Cys-26.

The protein belongs to the MG439/MG440 family.

It localises to the cell membrane. This is an uncharacterized protein from Mycoplasma pneumoniae (strain ATCC 29342 / M129 / Subtype 1) (Mycoplasmoides pneumoniae).